The sequence spans 136 residues: Large ribosomal subunit protein uL16 (136 aa).

The protein belongs to the universal ribosomal protein uL16 family. Part of the 50S ribosomal subunit.

In terms of biological role, binds 23S rRNA and is also seen to make contacts with the A and possibly P site tRNAs. The chain is Large ribosomal subunit protein uL16 from Shewanella halifaxensis (strain HAW-EB4).